The following is a 302-amino-acid chain: Ornithine carbamoyltransferase (302 aa).

Residues 52–55, glutamine 79, arginine 103, and 130–133 each bind carbamoyl phosphate; these read STRT and HPCQ. Residues asparagine 161, aspartate 222, and 226–227 contribute to the L-ornithine site; that span reads SM. Carbamoyl phosphate-binding positions include 262 to 263 and arginine 290; that span reads CL.

Belongs to the aspartate/ornithine carbamoyltransferase superfamily. OTCase family.

Its subcellular location is the cytoplasm. It catalyses the reaction carbamoyl phosphate + L-ornithine = L-citrulline + phosphate + H(+). It participates in amino-acid biosynthesis; L-arginine biosynthesis; L-arginine from L-ornithine and carbamoyl phosphate: step 1/3. Functionally, reversibly catalyzes the transfer of the carbamoyl group from carbamoyl phosphate (CP) to the N(epsilon) atom of ornithine (ORN) to produce L-citrulline. This is Ornithine carbamoyltransferase from Syntrophus aciditrophicus (strain SB).